Consider the following 188-residue polypeptide: Putative manganese efflux pump MntP (188 aa).

The next 6 helical transmembrane spans lie at 2–22 (IMGN…AFAV), 39–59 (LITG…GFLL), 67–87 (ITAI…LNMI), 107–127 (IILS…FAFL), 129–149 (VDIV…SFLG), and 166–186 (LAGG…HLGF).

The protein belongs to the MntP (TC 9.B.29) family.

The protein resides in the cell membrane. In terms of biological role, probably functions as a manganese efflux pump. The chain is Putative manganese efflux pump MntP from Desulfitobacterium hafniense (strain Y51).